Consider the following 303-residue polypeptide: Aspartate carbamoyltransferase catalytic subunit (303 aa).

Carbamoyl phosphate is bound by residues R54 and T55. An L-aspartate-binding site is contributed by K83. Positions 104, 132, and 135 each coordinate carbamoyl phosphate. 2 residues coordinate L-aspartate: R164 and R226. Residues L265 and P266 each contribute to the carbamoyl phosphate site.

Belongs to the aspartate/ornithine carbamoyltransferase superfamily. ATCase family. In terms of assembly, heterooligomer of catalytic and regulatory chains.

The catalysed reaction is carbamoyl phosphate + L-aspartate = N-carbamoyl-L-aspartate + phosphate + H(+). It functions in the pathway pyrimidine metabolism; UMP biosynthesis via de novo pathway; (S)-dihydroorotate from bicarbonate: step 2/3. Catalyzes the condensation of carbamoyl phosphate and aspartate to form carbamoyl aspartate and inorganic phosphate, the committed step in the de novo pyrimidine nucleotide biosynthesis pathway. This is Aspartate carbamoyltransferase catalytic subunit from Methanocorpusculum labreanum (strain ATCC 43576 / DSM 4855 / Z).